We begin with the raw amino-acid sequence, 73 residues long: Conotoxin Cl14.8 (73 aa).

The N-terminal stretch at 1–19 (MKLSVTFIALMLTMTLTQG) is a signal peptide. The propeptide occupies 20 to 47 (FVLQAIDGRDNSGLDDLSEADSMEHQLQ).

Belongs to the conotoxin L superfamily. Contains 2 disulfide bonds. Expressed by the venom duct.

It localises to the secreted. In Californiconus californicus (California cone), this protein is Conotoxin Cl14.8.